Here is a 660-residue protein sequence, read N- to C-terminus: UPF0603 protein MT2410 (660 aa).

Residues 1 to 26 (MRLVRLLGMVLTILAAGLLLGPPAGA) form the signal peptide. Residues 162–182 (VVLLVTVGIIVIVVAVLLVVM) form a helical membrane-spanning segment. The stretch at 488–567 (DQLTKVDADL…LEAAHDRKSS (80 aa)) forms a coiled coil. The helical transmembrane segment at 605–625 (GGNNAGAILGGIIIGDLLSGG) threads the bilayer. The interval 638–660 (FGGSSNAPGSSPDGGFLGGGGRF) is disordered.

It belongs to the UPF0603 family.

It localises to the cell membrane. Functionally, may play a role in septum formation. The polypeptide is UPF0603 protein MT2410 (Mycobacterium tuberculosis (strain CDC 1551 / Oshkosh)).